A 232-amino-acid polypeptide reads, in one-letter code: Large ribosomal subunit protein uL1 (232 aa).

The protein belongs to the universal ribosomal protein uL1 family. Part of the 50S ribosomal subunit.

Binds directly to 23S rRNA. The L1 stalk is quite mobile in the ribosome, and is involved in E site tRNA release. Its function is as follows. Protein L1 is also a translational repressor protein, it controls the translation of the L11 operon by binding to its mRNA. The sequence is that of Large ribosomal subunit protein uL1 from Bartonella bacilliformis (strain ATCC 35685 / KC583 / Herrer 020/F12,63).